A 510-amino-acid chain; its full sequence is GMP synthase [glutamine-hydrolyzing] (510 aa).

Residues 5–194 (DILVLDFGSQ…FAKICGCEST (190 aa)) enclose the Glutamine amidotransferase type-1 domain. Cysteine 82 acts as the Nucleophile in catalysis. Active-site residues include histidine 169 and glutamate 171. The 191-residue stretch at 195–385 (WNMGSFAKKE…LGLSRDIVYR (191 aa)) folds into the GMPS ATP-PPase domain. 222 to 228 (SGGVDSS) provides a ligand contact to ATP.

In terms of assembly, homodimer.

It catalyses the reaction XMP + L-glutamine + ATP + H2O = GMP + L-glutamate + AMP + diphosphate + 2 H(+). Its pathway is purine metabolism; GMP biosynthesis; GMP from XMP (L-Gln route): step 1/1. Functionally, catalyzes the synthesis of GMP from XMP. This chain is GMP synthase [glutamine-hydrolyzing], found in Campylobacter fetus subsp. fetus (strain 82-40).